The sequence spans 614 residues: Translation initiation factor IF-2 (614 aa).

Positions 115-283 (ARAPIVTIMG…ILLIAELNNY (169 aa)) constitute a tr-type G domain. Residues 124–131 (GHVDHGKT) form a G1 region. Residue 124–131 (GHVDHGKT) participates in GTP binding. Residues 149–153 (GITQH) form a G2 region. Positions 170-173 (DTPG) are G3. GTP-binding positions include 170 to 174 (DTPGH) and 224 to 227 (NKMD). The interval 224-227 (NKMD) is G4. A G5 region spans residues 260 to 262 (SAL).

It belongs to the TRAFAC class translation factor GTPase superfamily. Classic translation factor GTPase family. IF-2 subfamily.

It localises to the cytoplasm. One of the essential components for the initiation of protein synthesis. Protects formylmethionyl-tRNA from spontaneous hydrolysis and promotes its binding to the 30S ribosomal subunits. Also involved in the hydrolysis of GTP during the formation of the 70S ribosomal complex. This chain is Translation initiation factor IF-2, found in Ureaplasma parvum serovar 3 (strain ATCC 27815 / 27 / NCTC 11736).